Consider the following 76-residue polypeptide: UPF0346 protein LBUL_1194 (76 aa).

It belongs to the UPF0346 family.

This Lactobacillus delbrueckii subsp. bulgaricus (strain ATCC BAA-365 / Lb-18) protein is UPF0346 protein LBUL_1194.